The following is a 1342-amino-acid chain: DNA-directed RNA polymerase subunit beta (1342 aa).

The protein belongs to the RNA polymerase beta chain family. In terms of assembly, the RNAP catalytic core consists of 2 alpha, 1 beta, 1 beta' and 1 omega subunit. When a sigma factor is associated with the core the holoenzyme is formed, which can initiate transcription.

It catalyses the reaction RNA(n) + a ribonucleoside 5'-triphosphate = RNA(n+1) + diphosphate. Functionally, DNA-dependent RNA polymerase catalyzes the transcription of DNA into RNA using the four ribonucleoside triphosphates as substrates. This is DNA-directed RNA polymerase subunit beta from Aliivibrio fischeri (strain MJ11) (Vibrio fischeri).